The following is a 308-amino-acid chain: Electron transfer flavoprotein subunit alpha (308 aa).

252 to 280 (LYVAVGISGAIQHLAGMKDSKVIVAINKD) contacts FAD.

This sequence belongs to the ETF alpha-subunit/FixB family. As to quaternary structure, heterodimer of an alpha and a beta subunit. It depends on FAD as a cofactor.

Its function is as follows. The electron transfer flavoprotein serves as a specific electron acceptor for other dehydrogenases. It transfers the electrons to the main respiratory chain via ETF-ubiquinone oxidoreductase (ETF dehydrogenase). This Paracoccus denitrificans protein is Electron transfer flavoprotein subunit alpha (etfA).